A 441-amino-acid polypeptide reads, in one-letter code: Leucine-rich repeat-containing protein 17 (441 aa).

An N-terminal signal peptide occupies residues 1 to 18 (MRVVTIVILLCFCKAAEL). LRR repeat units lie at residues 82–103 (DLLH…MFSK), 106–127 (KLKS…AFFG), and 130–151 (KLTT…VFIY). In terms of domain architecture, LRRCT 1 spans 163-214 (NPWHCTCEIETLISMLQIPRNRNLGNYAKCESPQEQKNKKLRQIKSEQLCNE). Residues 225–268 (QVSGRPPVIKPEVDSTFCHNYVFPIQTLDCKRKELKKVPNNIPP) enclose the LRRNT domain. LRR repeat units follow at residues 269–290 (DIVK…EFED), 293–314 (ELKK…AFLG), and 317–340 (HLEE…EDLY). Residues 350-402 (NPWRCDYNIHYLYYWLKHHYNVHFNGLECKTPEEYKGWSVGKYIRSYYEECPK) form the LRRCT 2 domain.

In terms of tissue distribution, expressed in osteoblast cell lines. Well expressed in ovary, heart, pancreas, skeletal muscle, lung, and fetal kidney and lung and only at the basal levels in the other tissues examined including adult kidney. More expressed in S-type neuroblastoma cells than in N-type neuroblastoma cells.

The protein localises to the secreted. It is found in the extracellular space. In terms of biological role, involved in bone homeostasis. Acts as a negative regulator of RANKL-induced osteoclast precursor differentiation from bone marrow precursors. In Homo sapiens (Human), this protein is Leucine-rich repeat-containing protein 17 (LRRC17).